Here is a 437-residue protein sequence, read N- to C-terminus: MNYTTQMDAAKRGIVTKEMEIVAKKECMEISKLMNLVATGQVAIPANKNHKSLSPEGVGQDLKTKINVNLGISKDCYNIDAELEKVKKAVEMKAEAIMDLSCYGKTEEFRRKLIDMSPAMIGTVPMYDAIGFYDKELKDITAEELLAVVEKHAKDGVDFMTIHCGINRETAEVFKRNPRLMNLVSRGGSLLFAWMQLNNKENPFYEHFDKVLDICEKYDVTISLGDACRPGCIEDSTDPSQIKELITLGELTKRAWERNVQIIIEGPGHMSLSEIKTNMLLEKKLCHNAPFYVLGPIVTDVAPGYDHITSAIGGAIAASFGADFLCYVTPAEHLRLPNIDDMKEGIIATKIAAHAADIAKGIPGARDWDNKMSRARRDLDWDTMFELAIDPEKAKRYRAESIPEDEHTCTMCGKMCAVRNMNKVMDGKNINILREDD.

Substrate contacts are provided by residues Asn-69, Met-98, Tyr-127, His-163, 185–187 (SRG), 226–229 (DACR), and Glu-265. A Zn(2+)-binding site is contributed by His-269. Tyr-292 contacts substrate. Position 333 (His-333) interacts with Zn(2+). [4Fe-4S] cluster contacts are provided by Cys-409, Cys-412, and Cys-416.

Belongs to the ThiC family. The cofactor is [4Fe-4S] cluster.

The enzyme catalyses 5-amino-1-(5-phospho-beta-D-ribosyl)imidazole + S-adenosyl-L-methionine = 4-amino-2-methyl-5-(phosphooxymethyl)pyrimidine + CO + 5'-deoxyadenosine + formate + L-methionine + 3 H(+). Its pathway is cofactor biosynthesis; thiamine diphosphate biosynthesis. In terms of biological role, catalyzes the synthesis of the hydroxymethylpyrimidine phosphate (HMP-P) moiety of thiamine from aminoimidazole ribotide (AIR) in a radical S-adenosyl-L-methionine (SAM)-dependent reaction. This is Phosphomethylpyrimidine synthase from Clostridium novyi (strain NT).